The sequence spans 667 residues: E3 ubiquitin-protein ligase Midline-1 (667 aa).

The RING-type zinc finger occupies 10–60; the sequence is CPICLELFEDPLLLPCAHSLCFNCAHRILVSHCATNESVESITAFQCPTCR. Phosphoserine is present on residues Ser92 and Ser96. B box-type zinc fingers lie at residues 116–165 and 172–212; these read KVLC…IEPI and GLMC…VAAL. Zn(2+)-binding residues include Cys119, Cys122, Cys134, Cys137, Cys142, Cys145, His150, His159, Cys175, His178, Cys198, and His204. Positions 205–264 form a coiled coil; that stretch reads RDHQVAALSERYDKLKQNLESNLTNLIKRNTELETLLAKLIQTCQHVEVNASRQEAKLTE. One can recognise a COS domain in the interval 320–379; it reads LKENDHARFLQTAKNITERVSMATASSQVLIPEINLNDTFDTFALDFSREKKLLECLDYL. The Fibronectin type-III domain maps to 381-484; the sequence is APNPPTIREE…EPGKLKTNSQ (104 aa). Residues 471–485 show a composition bias toward polar residues; it reads SRSSEPGKLKTNSQP. The tract at residues 471 to 524 is disordered; that stretch reads SRSSEPGKLKTNSQPFKLDPKSAHRKLKVSHDNLTVERDESSSKKSHTPERFTS. Positions 482 to 659 constitute a B30.2/SPRY domain; that stretch reads NSQPFKLDPK…IITGLPIPDH (178 aa). Basic and acidic residues predominate over residues 499–520; the sequence is VSHDNLTVERDESSSKKSHTPE. At Ser511 the chain carries Phosphoserine.

Belongs to the TRIM/RBCC family. As to quaternary structure, homodimer or heterodimer with MID2. Interacts with IGBP1. Interacts with TRIM16. Phosphorylated on serine and threonine residues. In the fetus, highest expression found in kidney, followed by brain and lung. Expressed at low levels in fetal liver. In the adult, most abundant in heart, placenta and brain.

Its subcellular location is the cytoplasm. The protein localises to the cytoskeleton. It localises to the spindle. It carries out the reaction S-ubiquitinyl-[E2 ubiquitin-conjugating enzyme]-L-cysteine + [acceptor protein]-L-lysine = [E2 ubiquitin-conjugating enzyme]-L-cysteine + N(6)-ubiquitinyl-[acceptor protein]-L-lysine.. Functionally, has E3 ubiquitin ligase activity towards IGBP1, promoting its monoubiquitination, which results in deprotection of the catalytic subunit of protein phosphatase PP2A, and its subsequent degradation by polyubiquitination. In Homo sapiens (Human), this protein is E3 ubiquitin-protein ligase Midline-1 (MID1).